The sequence spans 876 residues: Aspartate--tRNA(Asp/Asn) ligase (876 aa).

Positions 1-278 (MAATDTPWRP…FGFKRAYEGF (278 aa)) are unknown. The segment at 279–876 (MHVYRSHTCG…PKPKKEVKEG (598 aa)) is aspartyl-tRNA synthetase. Residue glutamate 453 participates in L-aspartate binding. The tract at residues 477–480 (QQFK) is aspartate. Positions 499 and 729 each coordinate L-aspartate. Residue 499 to 501 (RDE) coordinates ATP. Glutamate 763 contacts ATP. Arginine 770 provides a ligand contact to L-aspartate. 815–818 (GVDR) serves as a coordination point for ATP.

Belongs to the class-II aminoacyl-tRNA synthetase family. Type 1 subfamily. As to quaternary structure, homodimer.

The protein localises to the cytoplasm. It carries out the reaction tRNA(Asx) + L-aspartate + ATP = L-aspartyl-tRNA(Asx) + AMP + diphosphate. In terms of biological role, aspartyl-tRNA synthetase with relaxed tRNA specificity since it is able to aspartylate not only its cognate tRNA(Asp) but also tRNA(Asn). Reaction proceeds in two steps: L-aspartate is first activated by ATP to form Asp-AMP and then transferred to the acceptor end of tRNA(Asp/Asn). The polypeptide is Aspartate--tRNA(Asp/Asn) ligase (aspS) (Paramagnetospirillum magneticum (strain ATCC 700264 / AMB-1) (Magnetospirillum magneticum)).